Consider the following 279-residue polypeptide: Lacto-N-neotetraose biosynthesis glycosyltransferase LgtB (279 aa).

The protein belongs to the glycosyltransferase 25 family.

It participates in glycan metabolism; lacto-N-neotetraose biosynthesis. The protein operates within bacterial outer membrane biogenesis; lipooligosaccharide biosynthesis. In terms of biological role, adds the second galactose to the lacto-N-tetraose chain in lipooligosaccharide (LOS). The polypeptide is Lacto-N-neotetraose biosynthesis glycosyltransferase LgtB (lgtB) (Neisseria meningitidis serogroup A / serotype 4A (strain DSM 15465 / Z2491)).